Consider the following 57-residue polypeptide: Large ribosomal subunit protein bL32 (57 aa).

The disordered stretch occupies residues 1–23 (MAVPKKKTSKSKRDKRRATWRHK).

Belongs to the bacterial ribosomal protein bL32 family.

This is Large ribosomal subunit protein bL32 from Nostoc sp. (strain PCC 7120 / SAG 25.82 / UTEX 2576).